The chain runs to 170 residues: 3-hydroxydecanoyl-[acyl-carrier-protein] dehydratase (170 aa).

His-71 is a catalytic residue.

It belongs to the thioester dehydratase family. FabA subfamily. In terms of assembly, homodimer.

Its subcellular location is the cytoplasm. The enzyme catalyses a (3R)-hydroxyacyl-[ACP] = a (2E)-enoyl-[ACP] + H2O. It catalyses the reaction (3R)-hydroxydecanoyl-[ACP] = (2E)-decenoyl-[ACP] + H2O. It carries out the reaction (2E)-decenoyl-[ACP] = (3Z)-decenoyl-[ACP]. It participates in lipid metabolism; fatty acid biosynthesis. In terms of biological role, necessary for the introduction of cis unsaturation into fatty acids. Catalyzes the dehydration of (3R)-3-hydroxydecanoyl-ACP to E-(2)-decenoyl-ACP and then its isomerization to Z-(3)-decenoyl-ACP. Can catalyze the dehydratase reaction for beta-hydroxyacyl-ACPs with saturated chain lengths up to 16:0, being most active on intermediate chain length. This chain is 3-hydroxydecanoyl-[acyl-carrier-protein] dehydratase, found in Chelativorans sp. (strain BNC1).